A 301-amino-acid polypeptide reads, in one-letter code: tRNA pseudouridine synthase B (301 aa).

Catalysis depends on aspartate 47, which acts as the Nucleophile.

It belongs to the pseudouridine synthase TruB family. Type 1 subfamily.

It catalyses the reaction uridine(55) in tRNA = pseudouridine(55) in tRNA. Responsible for synthesis of pseudouridine from uracil-55 in the psi GC loop of transfer RNAs. In Cereibacter sphaeroides (strain ATCC 17023 / DSM 158 / JCM 6121 / CCUG 31486 / LMG 2827 / NBRC 12203 / NCIMB 8253 / ATH 2.4.1.) (Rhodobacter sphaeroides), this protein is tRNA pseudouridine synthase B.